The primary structure comprises 403 residues: DNA polymerase IV (403 aa).

Residues 23-203 enclose the UmuC domain; sequence IAHMDCDAFY…KPVNILPGVG (181 aa). Mg(2+)-binding residues include Asp27 and Asp120. The active site involves Glu121.

The protein belongs to the DNA polymerase type-Y family. In terms of assembly, monomer. Mg(2+) is required as a cofactor.

Its subcellular location is the cytoplasm. It carries out the reaction DNA(n) + a 2'-deoxyribonucleoside 5'-triphosphate = DNA(n+1) + diphosphate. Functionally, poorly processive, error-prone DNA polymerase involved in untargeted mutagenesis. Copies undamaged DNA at stalled replication forks, which arise in vivo from mismatched or misaligned primer ends. These misaligned primers can be extended by PolIV. Exhibits no 3'-5' exonuclease (proofreading) activity. May be involved in translesional synthesis, in conjunction with the beta clamp from PolIII. The protein is DNA polymerase IV of Caulobacter vibrioides (strain ATCC 19089 / CIP 103742 / CB 15) (Caulobacter crescentus).